The following is a 315-amino-acid chain: MKAENEQRTGLLYGFGAYGMWGLVPLFWPLLKPSGAVEILAHRMVWSLAVVGLALLALRRWGWIRELLRNPRKLGLTALAASVISVNWGLYIWSVNNEHVVEASLGYFINPLVSIAIGVLVLGERLRRAQWVAVGLSFVAVLVLAIGYGRPPWISLVLAFSFATYGLIKKKLNMGGLESLAAETAVLFLPALGYVLWLGAQGQSTFAAHGVGHALLLAATGLVTAIPLVFFGMAAIRVPLSTLGLLQYMAPVFQFGLGVLYFHEAMPPERWAGFSLVWAALVILTWDALRTARRSRARLEAAAPTVLATPAREPA.

9 consecutive transmembrane segments (helical) span residues 11–31, 37–57, 75–95, 103–123, 129–149, 180–200, 216–236, 242–262, and 271–291; these read LLYG…WPLL, VEIL…ALLA, GLTA…IWSV, ASLG…LVLG, AQWV…IGYG, LAAE…WLGA, LLAA…MAAI, TLGL…VLYF, and WAGF…ALRT. In terms of domain architecture, EamA spans 19–146; that stretch reads GMWGLVPLFW…SFVAVLVLAI (128 aa).

It belongs to the EamA transporter family.

The protein resides in the cell membrane. The sequence is that of Protein RarD (rarD) from Streptomyces exfoliatus (Streptomyces hydrogenans).